Consider the following 240-residue polypeptide: Dihydromonapterin reductase (240 aa).

The Proton acceptor role is filled by Tyr152.

Belongs to the short-chain dehydrogenases/reductases (SDR) family. FolM subfamily.

The enzyme catalyses (6S)-5,6,7,8-tetrahydrofolate + NADP(+) = 7,8-dihydrofolate + NADPH + H(+). The catalysed reaction is 7,8-dihydromonapterin + NADPH + H(+) = 5,6,7,8-tetrahydromonapterin + NADP(+). Its function is as follows. Catalyzes the reduction of dihydromonapterin to tetrahydromonapterin. Also has lower activity with dihydrofolate. This chain is Dihydromonapterin reductase (folM), found in Shigella sonnei (strain Ss046).